An 89-amino-acid chain; its full sequence is Small ribosomal subunit protein uS15c (89 aa).

This sequence belongs to the universal ribosomal protein uS15 family. Part of the 30S ribosomal subunit.

It is found in the plastid. This is Small ribosomal subunit protein uS15c (rps15) from Aneura mirabilis (Parasitic liverwort).